Reading from the N-terminus, the 158-residue chain is S-ribosylhomocysteine lyase (158 aa).

Fe cation-binding residues include His-54, His-58, and Cys-124.

Belongs to the LuxS family. In terms of assembly, homodimer. Fe cation serves as cofactor.

The enzyme catalyses S-(5-deoxy-D-ribos-5-yl)-L-homocysteine = (S)-4,5-dihydroxypentane-2,3-dione + L-homocysteine. Its function is as follows. Involved in the synthesis of autoinducer 2 (AI-2) which is secreted by bacteria and is used to communicate both the cell density and the metabolic potential of the environment. The regulation of gene expression in response to changes in cell density is called quorum sensing. Catalyzes the transformation of S-ribosylhomocysteine (RHC) to homocysteine (HC) and 4,5-dihydroxy-2,3-pentadione (DPD). This is S-ribosylhomocysteine lyase from Limosilactobacillus reuteri (strain DSM 20016) (Lactobacillus reuteri).